Here is a 365-residue protein sequence, read N- to C-terminus: Peptide chain release factor 2 (365 aa).

N5-methylglutamine is present on Gln-251.

Belongs to the prokaryotic/mitochondrial release factor family. In terms of processing, methylated by PrmC. Methylation increases the termination efficiency of RF2.

It localises to the cytoplasm. In terms of biological role, peptide chain release factor 2 directs the termination of translation in response to the peptide chain termination codons UGA and UAA. In Campylobacter jejuni subsp. jejuni serotype O:6 (strain 81116 / NCTC 11828), this protein is Peptide chain release factor 2.